The primary structure comprises 97 residues: Co-chaperonin GroES (97 aa).

This sequence belongs to the GroES chaperonin family. Heptamer of 7 subunits arranged in a ring. Interacts with the chaperonin GroEL.

The protein resides in the cytoplasm. Its function is as follows. Together with the chaperonin GroEL, plays an essential role in assisting protein folding. The GroEL-GroES system forms a nano-cage that allows encapsulation of the non-native substrate proteins and provides a physical environment optimized to promote and accelerate protein folding. GroES binds to the apical surface of the GroEL ring, thereby capping the opening of the GroEL channel. In Aeromonas salmonicida, this protein is Co-chaperonin GroES.